The primary structure comprises 384 residues: S-adenosylmethionine synthase (384 aa).

Position 15 (histidine 15) interacts with ATP. Aspartate 17 lines the Mg(2+) pocket. K(+) is bound at residue glutamate 43. Residues glutamate 56 and glutamine 99 each coordinate L-methionine. The flexible loop stretch occupies residues 99 to 109 (QSPDINQGVDR). Residues 164–166 (DAK), 231–232 (RF), aspartate 240, 246–247 (RK), alanine 263, and lysine 267 contribute to the ATP site. Aspartate 240 lines the L-methionine pocket. Lysine 271 contacts L-methionine.

The protein belongs to the AdoMet synthase family. As to quaternary structure, homotetramer; dimer of dimers. Requires Mg(2+) as cofactor. The cofactor is K(+).

It is found in the cytoplasm. The catalysed reaction is L-methionine + ATP + H2O = S-adenosyl-L-methionine + phosphate + diphosphate. The protein operates within amino-acid biosynthesis; S-adenosyl-L-methionine biosynthesis; S-adenosyl-L-methionine from L-methionine: step 1/1. Catalyzes the formation of S-adenosylmethionine (AdoMet) from methionine and ATP. The overall synthetic reaction is composed of two sequential steps, AdoMet formation and the subsequent tripolyphosphate hydrolysis which occurs prior to release of AdoMet from the enzyme. This Shewanella piezotolerans (strain WP3 / JCM 13877) protein is S-adenosylmethionine synthase.